Reading from the N-terminus, the 421-residue chain is Aspartokinase (421 aa).

7–10 (KYGG) serves as a coordination point for ATP. 25-30 (RIVATK) provides a ligand contact to substrate. Position 41 (serine 41) interacts with ATP. Residues 45-49 (DTTDD), glutamate 74, 125-126 (LE), 151-154 (RGGS), and serine 154 contribute to the substrate site. ATP is bound by residues 174–175 (TD), 180–185 (FSADPR), and lysine 210. ACT domains follow at residues 267-348 (VTIV…GKVS) and 349-421 (LIGA…GTGR). Substrate-binding positions include aspartate 274, 274–279 (DIPGYA), 292–294 (NID), glutamine 298, 360–361 (VT), 374–375 (NI), and 381–382 (SE).

This sequence belongs to the aspartokinase family. Heterotetramer consisting of 2 isoforms Alpha (catalytic and regulation) and of a homodimer of 2 isoforms Beta (regulation).

It catalyses the reaction L-aspartate + ATP = 4-phospho-L-aspartate + ADP. It participates in amino-acid biosynthesis; L-lysine biosynthesis via DAP pathway; (S)-tetrahydrodipicolinate from L-aspartate: step 1/4. The protein operates within amino-acid biosynthesis; L-methionine biosynthesis via de novo pathway; L-homoserine from L-aspartate: step 1/3. It functions in the pathway amino-acid biosynthesis; L-threonine biosynthesis; L-threonine from L-aspartate: step 1/5. With respect to regulation, feedback inhibition by lysine and threonine. In terms of biological role, catalyzes the phosphorylation of the beta-carboxyl group of aspartic acid with ATP to yield 4-phospho-L-aspartate, which is involved in the branched biosynthetic pathway leading to the biosynthesis of amino acids lysine, threonine, isoleucine and methionine. The polypeptide is Aspartokinase (ask) (Mycobacterium bovis (strain ATCC BAA-935 / AF2122/97)).